The following is a 176-amino-acid chain: RNA pyrophosphohydrolase (176 aa).

Residues 6-149 (GYRPNVGIVI…KRDVYRRVMK (144 aa)) form the Nudix hydrolase domain. The Nudix box motif lies at 38–59 (GGINPGESAEQAMYRELFEEVG).

This sequence belongs to the Nudix hydrolase family. RppH subfamily. Requires a divalent metal cation as cofactor.

Its function is as follows. Accelerates the degradation of transcripts by removing pyrophosphate from the 5'-end of triphosphorylated RNA, leading to a more labile monophosphorylated state that can stimulate subsequent ribonuclease cleavage. The chain is RNA pyrophosphohydrolase from Shigella dysenteriae serotype 1 (strain Sd197).